The chain runs to 65 residues: Large ribosomal subunit protein bL35 (65 aa).

The interval 1–23 (MPKMKSNRGAAKRFKRTGSGKFK) is disordered. Residues 10–23 (AAKRFKRTGSGKFK) are compositionally biased toward basic residues.

Belongs to the bacterial ribosomal protein bL35 family.

The polypeptide is Large ribosomal subunit protein bL35 (Acidithiobacillus ferrooxidans (strain ATCC 53993 / BNL-5-31) (Leptospirillum ferrooxidans (ATCC 53993))).